The primary structure comprises 313 residues: Beta-ketoacyl-[acyl-carrier-protein] synthase III (313 aa).

Catalysis depends on residues Cys112 and His238. The segment at 239–243 (QANIR) is ACP-binding. Residue Asn268 is part of the active site.

The protein belongs to the thiolase-like superfamily. FabH family. Homodimer.

It is found in the cytoplasm. It carries out the reaction malonyl-[ACP] + acetyl-CoA + H(+) = 3-oxobutanoyl-[ACP] + CO2 + CoA. It functions in the pathway lipid metabolism; fatty acid biosynthesis. Functionally, catalyzes the condensation reaction of fatty acid synthesis by the addition to an acyl acceptor of two carbons from malonyl-ACP. Catalyzes the first condensation reaction which initiates fatty acid synthesis and may therefore play a role in governing the total rate of fatty acid production. Possesses both acetoacetyl-ACP synthase and acetyl transacylase activities. Its substrate specificity determines the biosynthesis of branched-chain and/or straight-chain of fatty acids. This is Beta-ketoacyl-[acyl-carrier-protein] synthase III from Staphylococcus epidermidis (strain ATCC 35984 / DSM 28319 / BCRC 17069 / CCUG 31568 / BM 3577 / RP62A).